The sequence spans 394 residues: GDSL esterase/lipase At2g27360 (394 aa).

The signal sequence occupies residues 1 to 24; the sequence is MASQDCHMLLSFFISTFLITVVTS. The active-site Nucleophile is the Ser40. N-linked (GlcNAc...) asparagine glycans are attached at residues Asn136 and Asn319. Residues Asp344 and His347 contribute to the active site. 2 N-linked (GlcNAc...) asparagine glycosylation sites follow: Asn371 and Asn382.

The protein belongs to the 'GDSL' lipolytic enzyme family.

Its subcellular location is the secreted. The polypeptide is GDSL esterase/lipase At2g27360 (Arabidopsis thaliana (Mouse-ear cress)).